Consider the following 141-residue polypeptide: HTH-type transcriptional repressor NsrR (141 aa).

The region spanning Gln-2–Thr-129 is the HTH rrf2-type domain. A DNA-binding region (H-T-H motif) is located at residues Ile-28–Gln-51. Residues Cys-91, Cys-96, and Cys-102 each coordinate [2Fe-2S] cluster.

Requires [2Fe-2S] cluster as cofactor.

Nitric oxide-sensitive repressor of genes involved in protecting the cell against nitrosative stress. May require iron for activity. This Aliivibrio fischeri (strain ATCC 700601 / ES114) (Vibrio fischeri) protein is HTH-type transcriptional repressor NsrR.